We begin with the raw amino-acid sequence, 250 residues long: Ribonuclease HII (250 aa).

Residues 66–250 enclose the RNase H type-2 domain; sequence QLVAGVDEVG…TFAPVSDFFK (185 aa). Residues D72, E73, and D164 each coordinate a divalent metal cation.

This sequence belongs to the RNase HII family. Mn(2+) serves as cofactor. It depends on Mg(2+) as a cofactor.

The protein resides in the cytoplasm. The catalysed reaction is Endonucleolytic cleavage to 5'-phosphomonoester.. Endonuclease that specifically degrades the RNA of RNA-DNA hybrids. The polypeptide is Ribonuclease HII (Lactobacillus acidophilus (strain ATCC 700396 / NCK56 / N2 / NCFM)).